The chain runs to 334 residues: MNIYYDKNADLNIIKDMKVAIVGYGSQGHAHANNLRDSNVEVVVALRDGSASSKKASDAGLNVKSIKQATAWADLIMVLAPDEFQAQIYTDSIEPNLKQGATLAFAHGFNIHYNRIIPRADLDVIMIAPKAPGHTVRSEFVKGGGIPDLIAVFQDVSGNAKDTALSYASAIGGGRTGILETSFKDETETDLFGEQVVLCGGTTALVQAGFETLVEAGYEPEMAYFECLHELKLIVDLMYEGGIANMRYSISNTAEYGDITRGSRIVTADTKDEMKKILIEIQNGVFAKEFVANVGELPAHREVQRAHQIEQVGESLRSMMPWINKNKIVDQSKN.

One can recognise a KARI N-terminal Rossmann domain in the interval 1-181 (MNIYYDKNAD…GGGRTGILET (181 aa)). NADP(+)-binding positions include 24–27 (YGSQ), arginine 47, serine 50, serine 52, and 82–85 (DEFQ). Histidine 107 is an active-site residue. Glycine 133 lines the NADP(+) pocket. The KARI C-terminal knotted domain occupies 182 to 323 (SFKDETETDL…ESLRSMMPWI (142 aa)). Positions 190, 194, 226, and 230 each coordinate Mg(2+). Serine 251 serves as a coordination point for substrate.

It belongs to the ketol-acid reductoisomerase family. Mg(2+) serves as cofactor.

The enzyme catalyses (2R)-2,3-dihydroxy-3-methylbutanoate + NADP(+) = (2S)-2-acetolactate + NADPH + H(+). It catalyses the reaction (2R,3R)-2,3-dihydroxy-3-methylpentanoate + NADP(+) = (S)-2-ethyl-2-hydroxy-3-oxobutanoate + NADPH + H(+). It functions in the pathway amino-acid biosynthesis; L-isoleucine biosynthesis; L-isoleucine from 2-oxobutanoate: step 2/4. It participates in amino-acid biosynthesis; L-valine biosynthesis; L-valine from pyruvate: step 2/4. Its function is as follows. Involved in the biosynthesis of branched-chain amino acids (BCAA). Catalyzes an alkyl-migration followed by a ketol-acid reduction of (S)-2-acetolactate (S2AL) to yield (R)-2,3-dihydroxy-isovalerate. In the isomerase reaction, S2AL is rearranged via a Mg-dependent methyl migration to produce 3-hydroxy-3-methyl-2-ketobutyrate (HMKB). In the reductase reaction, this 2-ketoacid undergoes a metal-dependent reduction by NADPH to yield (R)-2,3-dihydroxy-isovalerate. This chain is Ketol-acid reductoisomerase (NADP(+)), found in Vesicomyosocius okutanii subsp. Calyptogena okutanii (strain HA).